Consider the following 893-residue polypeptide: DNA gyrase subunit A (893 aa).

A Topo IIA-type catalytic domain is found at L35–L501. Y123 (O-(5'-phospho-DNA)-tyrosine intermediate) is an active-site residue. The GyrA-box signature appears at Q528–G534. Residues V810–E893 form a disordered region. 2 stretches are compositionally biased toward acidic residues: residues E812–D821 and D852–E862. Residues N863–E879 are compositionally biased toward basic and acidic residues. Positions D880 to E893 are enriched in acidic residues.

It belongs to the type II topoisomerase GyrA/ParC subunit family. In terms of assembly, heterotetramer, composed of two GyrA and two GyrB chains. In the heterotetramer, GyrA contains the active site tyrosine that forms a transient covalent intermediate with DNA, while GyrB binds cofactors and catalyzes ATP hydrolysis.

It is found in the cytoplasm. It catalyses the reaction ATP-dependent breakage, passage and rejoining of double-stranded DNA.. A type II topoisomerase that negatively supercoils closed circular double-stranded (ds) DNA in an ATP-dependent manner to modulate DNA topology and maintain chromosomes in an underwound state. Negative supercoiling favors strand separation, and DNA replication, transcription, recombination and repair, all of which involve strand separation. Also able to catalyze the interconversion of other topological isomers of dsDNA rings, including catenanes and knotted rings. Type II topoisomerases break and join 2 DNA strands simultaneously in an ATP-dependent manner. The protein is DNA gyrase subunit A of Staphylococcus epidermidis (strain ATCC 35984 / DSM 28319 / BCRC 17069 / CCUG 31568 / BM 3577 / RP62A).